Here is a 1245-residue protein sequence, read N- to C-terminus: Nidogen-1 (1245 aa).

An N-terminal signal peptide occupies residues 1-28 (MLDASGCSWAMWTWALLQLLLLVGPGGC). The 163-residue stretch at 106 to 268 (PFLADLDTTD…GVWVFEIGSP (163 aa)) folds into the NIDO domain. N-linked (GlcNAc...) asparagine glycosylation occurs at Asn-187. Sulfotyrosine occurs at positions 290 and 295. The O-linked (GalNAc...) threonine glycan is linked to Thr-299. Residues 307-344 (VATPSPSHSPRRGYPDPHNVPRILSPGYEATERPRGVP) form a disordered region. Ser-331 carries an O-linked (GalNAc...) serine glycan. O-linked (GalNAc...) threonine glycosylation is found at Thr-337 and Thr-345. Thr-348 carries an O-linked (GalNAc...) threonine; partial glycan. Positions 384–424 (SQQTCANNRHQCSVHAECRDYATGFCCRCVANYTGNGRQCV) constitute an EGF-like 1 domain. Intrachain disulfides connect Cys-388–Cys-401, Cys-395–Cys-410, Cys-409–Cys-616, Cys-412–Cys-423, Cys-670–Cys-683, Cys-677–Cys-693, Cys-695–Cys-706, Cys-712–Cys-725, Cys-719–Cys-734, Cys-736–Cys-748, Cys-760–Cys-775, Cys-767–Cys-785, Cys-787–Cys-798, Cys-804–Cys-815, Cys-809–Cys-824, Cys-826–Cys-837, Cys-847–Cys-876, Cys-887–Cys-894, and Cys-896–Cys-917. A glycan (N-linked (GlcNAc...) asparagine) is linked at Asn-415. In terms of domain architecture, Nidogen G2 beta-barrel spans 428 to 665 (SPQRVNGKVK…GPVRDGSPDA (238 aa)). The EGF-like 2 domain occupies 666–707 (LQNPCYIGTHGCDSNAACRPGPGTQFTCECSIGFRGDGQTCY). The Cell attachment site motif lies at 700 to 702 (RGD). Residues 708-749 (DIDECSEQPSRCGNHAVCNNLPGTFRCECVEGYHFSDRGTCV) form the EGF-like 3; calcium-binding domain. The EGF-like 4 domain maps to 756-799 (PINYCETGLHNCDIPQRAQCIYMGGSSYTCSCLPGFSGDGRACR). An EGF-like 5; calcium-binding domain is found at 800 to 838 (DVDECQHSRCHPDAFCYNTPGSFTCQCKPGYQGDGFRCM). The Thyroglobulin type-1 domain occupies 844–917 (KTRCQLEREH…RTPPGMRPPC (74 aa)). O-linked (GalNAc...) threonine glycans are attached at residues Thr-920 and Thr-933. LDL-receptor class B repeat units follow at residues 988–1030 (KVVY…DHLG), 1031–1073 (RTIF…DPVR), 1074–1118 (GNLY…DAFS), and 1119–1160 (SQLC…YGKN). In terms of domain architecture, EGF-like 6 spans 1206–1242 (GHNYCSVNNGGCTHLCLPTPGSRTCRCPDNTLGVDCI). 3 cysteine pairs are disulfide-bonded: Cys-1210–Cys-1221, Cys-1217–Cys-1230, and Cys-1232–Cys-1241.

In terms of assembly, interacts with FBLN1. Interacts with LGALS3BP. Interacts with PLXDC1. Interacts with SVEP1. Post-translationally, N- and O-glycosylated.

The protein localises to the secreted. It is found in the extracellular space. It localises to the extracellular matrix. Its subcellular location is the basement membrane. Functionally, sulfated glycoprotein widely distributed in basement membranes and tightly associated with laminin. Also binds to collagen IV and perlecan. It probably has a role in cell-extracellular matrix interactions. This is Nidogen-1 (Nid1) from Mus musculus (Mouse).